Here is a 237-residue protein sequence, read N- to C-terminus: uncharacterized protein (237 aa).

This is an uncharacterized protein from Schizosaccharomyces pombe (strain 972 / ATCC 24843) (Fission yeast).